Consider the following 261-residue polypeptide: Probable cyclic nucleotide phosphodiesterase PSM_A2567 (261 aa).

Asp-22, His-24, Asp-62, Asn-94, His-160, His-198, and His-200 together coordinate Fe cation. AMP is bound by residues His-24, Asp-62, and 94 to 95 (NH). Position 200 (His-200) interacts with AMP.

The protein belongs to the cyclic nucleotide phosphodiesterase class-III family. It depends on Fe(2+) as a cofactor.

This chain is Probable cyclic nucleotide phosphodiesterase PSM_A2567, found in Pseudoalteromonas sp. (strain SM9913).